Here is a 108-residue protein sequence, read N- to C-terminus: MADPRVRQIKIKTGVVKRLVKEKVMYEKEAKQQEEKIEKMKAEDGENYAIKKQAEILQESRMMIPDCQRRLEAAYTDLRQILESEKDLEEAEEYKEARIVLDSVKLEA.

The residue at position 2 (alanine 2) is an N-acetylalanine.

The protein belongs to the TBCA family. Supercomplex made of cofactors A to E. Cofactors A and D function by capturing and stabilizing tubulin in a quasi-native conformation. Cofactor E binds to the cofactor D-tubulin complex; interaction with cofactor C then causes the release of tubulin polypeptides that are committed to the native state.

It localises to the cytoplasm. Its subcellular location is the cytoskeleton. In terms of biological role, tubulin-folding protein; involved in the early step of the tubulin folding pathway. This is Tubulin-specific chaperone A (Tbca) from Rattus norvegicus (Rat).